A 225-amino-acid polypeptide reads, in one-letter code: Uracil-DNA glycosylase (225 aa).

Asp64 acts as the Proton acceptor in catalysis.

The protein belongs to the uracil-DNA glycosylase (UDG) superfamily. UNG family.

The protein localises to the cytoplasm. The enzyme catalyses Hydrolyzes single-stranded DNA or mismatched double-stranded DNA and polynucleotides, releasing free uracil.. Functionally, excises uracil residues from the DNA which can arise as a result of misincorporation of dUMP residues by DNA polymerase or due to deamination of cytosine. The sequence is that of Uracil-DNA glycosylase from Agathobacter rectalis (strain ATCC 33656 / DSM 3377 / JCM 17463 / KCTC 5835 / VPI 0990) (Eubacterium rectale).